Consider the following 32-residue polypeptide: Photosystem II reaction center protein T (32 aa).

Residues 3-23 traverse the membrane as a helical segment; that stretch reads ALVYTFLLIGTLIVIFFAVFF.

The protein belongs to the PsbT family. In terms of assembly, PSII is composed of 1 copy each of membrane proteins PsbA, PsbB, PsbC, PsbD, PsbE, PsbF, PsbH, PsbI, PsbJ, PsbK, PsbL, PsbM, PsbT, PsbX, PsbY, PsbZ, Psb30/Ycf12, at least 3 peripheral proteins of the oxygen-evolving complex and a large number of cofactors. It forms dimeric complexes.

Its subcellular location is the plastid. The protein localises to the chloroplast thylakoid membrane. In terms of biological role, found at the monomer-monomer interface of the photosystem II (PS II) dimer, plays a role in assembly and dimerization of PSII. PSII is a light-driven water plastoquinone oxidoreductase, using light energy to abstract electrons from H(2)O, generating a proton gradient subsequently used for ATP formation. This chain is Photosystem II reaction center protein T, found in Phaeodactylum tricornutum (strain CCAP 1055/1).